Reading from the N-terminus, the 162-residue chain is Protein hcp1 (162 aa).

Belongs to the hcp1 family. As to quaternary structure, hexamer. Three hcp1 monomers form two closely related hexameric rings with a 40 Angstrom internal diameter.

It localises to the secreted. Required for assembly of the protein secretion apparatus HSI-I. Actively secreted during chronic infection of cystic fibrosis patients. The protein is Protein hcp1 (hcp1) of Pseudomonas aeruginosa (strain ATCC 15692 / DSM 22644 / CIP 104116 / JCM 14847 / LMG 12228 / 1C / PRS 101 / PAO1).